Reading from the N-terminus, the 522-residue chain is Tetratricopeptide repeat protein 39C (522 aa).

TPR repeat units lie at residues 254 to 287 (SLFM…AVDQ), 292 to 325 (HVCL…SRWS), and 424 to 457 (GLKH…ESCR).

The protein belongs to the TTC39 family.

This Rattus norvegicus (Rat) protein is Tetratricopeptide repeat protein 39C (Ttc39c).